The sequence spans 192 residues: Holliday junction branch migration complex subunit RuvA (192 aa).

The segment at methionine 1–leucine 61 is domain I. Residues serine 62 to alanine 137 form a domain II region. The flexible linker stretch occupies residues alanine 137–threonine 140. The domain III stretch occupies residues aspartate 141–lysine 192.

Belongs to the RuvA family. Homotetramer. Forms an RuvA(8)-RuvB(12)-Holliday junction (HJ) complex. HJ DNA is sandwiched between 2 RuvA tetramers; dsDNA enters through RuvA and exits via RuvB. An RuvB hexamer assembles on each DNA strand where it exits the tetramer. Each RuvB hexamer is contacted by two RuvA subunits (via domain III) on 2 adjacent RuvB subunits; this complex drives branch migration. In the full resolvosome a probable DNA-RuvA(4)-RuvB(12)-RuvC(2) complex forms which resolves the HJ.

The protein resides in the cytoplasm. The RuvA-RuvB-RuvC complex processes Holliday junction (HJ) DNA during genetic recombination and DNA repair, while the RuvA-RuvB complex plays an important role in the rescue of blocked DNA replication forks via replication fork reversal (RFR). RuvA specifically binds to HJ cruciform DNA, conferring on it an open structure. The RuvB hexamer acts as an ATP-dependent pump, pulling dsDNA into and through the RuvAB complex. HJ branch migration allows RuvC to scan DNA until it finds its consensus sequence, where it cleaves and resolves the cruciform DNA. This chain is Holliday junction branch migration complex subunit RuvA, found in Lactobacillus gasseri (strain ATCC 33323 / DSM 20243 / BCRC 14619 / CIP 102991 / JCM 1131 / KCTC 3163 / NCIMB 11718 / NCTC 13722 / AM63).